Here is a 67-residue protein sequence, read N- to C-terminus: MPSKNCAKNLHACQWERDIALVFLGLMVLFNIGQVVYMNRARLYRLIRRGAEQIPADDEEPIIGIRD.

Residues 1–18 lie on the Extracellular side of the membrane; that stretch reads MPSKNCAKNLHACQWERD. Residues 19–39 form a helical membrane-spanning segment; the sequence is IALVFLGLMVLFNIGQVVYMN. Topologically, residues 40–67 are cytoplasmic; it reads RARLYRLIRRGAEQIPADDEEPIIGIRD.

As to expression, ubiquitously present in most tissues tested. Expressed in the somatic cells of intestine, muscle, neurons, somatic gonad and embryos but not in the germline (at protein level).

The protein localises to the late endosome membrane. Its function is as follows. Plays a role in RNA-mediated gene silencing by mediating transport of both ingested and endogenous dsRNA between cells. Not required for the uptake of dsRNA from the intestinal lumen. This chain is Systemic RNA interference defective protein 5, found in Caenorhabditis elegans.